A 205-amino-acid polypeptide reads, in one-letter code: Thiamine-phosphate synthase (205 aa).

4-amino-2-methyl-5-(diphosphooxymethyl)pyrimidine is bound by residues 34 to 38 and asparagine 66; that span reads QLRCK. Aspartate 67 and aspartate 86 together coordinate Mg(2+). Serine 105 contributes to the 4-amino-2-methyl-5-(diphosphooxymethyl)pyrimidine binding site. 131–133 provides a ligand contact to 2-[(2R,5Z)-2-carboxy-4-methylthiazol-5(2H)-ylidene]ethyl phosphate; sequence TTT. Residue lysine 134 participates in 4-amino-2-methyl-5-(diphosphooxymethyl)pyrimidine binding. Glycine 163 serves as a coordination point for 2-[(2R,5Z)-2-carboxy-4-methylthiazol-5(2H)-ylidene]ethyl phosphate.

Belongs to the thiamine-phosphate synthase family. The cofactor is Mg(2+).

The catalysed reaction is 2-[(2R,5Z)-2-carboxy-4-methylthiazol-5(2H)-ylidene]ethyl phosphate + 4-amino-2-methyl-5-(diphosphooxymethyl)pyrimidine + 2 H(+) = thiamine phosphate + CO2 + diphosphate. The enzyme catalyses 2-(2-carboxy-4-methylthiazol-5-yl)ethyl phosphate + 4-amino-2-methyl-5-(diphosphooxymethyl)pyrimidine + 2 H(+) = thiamine phosphate + CO2 + diphosphate. It catalyses the reaction 4-methyl-5-(2-phosphooxyethyl)-thiazole + 4-amino-2-methyl-5-(diphosphooxymethyl)pyrimidine + H(+) = thiamine phosphate + diphosphate. It participates in cofactor biosynthesis; thiamine diphosphate biosynthesis; thiamine phosphate from 4-amino-2-methyl-5-diphosphomethylpyrimidine and 4-methyl-5-(2-phosphoethyl)-thiazole: step 1/1. Functionally, condenses 4-methyl-5-(beta-hydroxyethyl)thiazole monophosphate (THZ-P) and 2-methyl-4-amino-5-hydroxymethyl pyrimidine pyrophosphate (HMP-PP) to form thiamine monophosphate (TMP). The chain is Thiamine-phosphate synthase from Neisseria gonorrhoeae (strain ATCC 700825 / FA 1090).